Consider the following 273-residue polypeptide: NADPH-dependent 7-cyano-7-deazaguanine reductase (273 aa).

81-83 (VES) serves as a coordination point for substrate. An NADPH-binding site is contributed by 83–84 (SK). The active-site Thioimide intermediate is the Cys179. The active-site Proton donor is the Asp186. 218–219 (AE) is a substrate binding site. 247–248 (RG) is a binding site for NADPH.

Belongs to the GTP cyclohydrolase I family. QueF type 2 subfamily. In terms of assembly, homodimer.

Its subcellular location is the cytoplasm. It carries out the reaction 7-aminomethyl-7-carbaguanine + 2 NADP(+) = 7-cyano-7-deazaguanine + 2 NADPH + 3 H(+). It participates in tRNA modification; tRNA-queuosine biosynthesis. In terms of biological role, catalyzes the NADPH-dependent reduction of 7-cyano-7-deazaguanine (preQ0) to 7-aminomethyl-7-deazaguanine (preQ1). The polypeptide is NADPH-dependent 7-cyano-7-deazaguanine reductase (Rickettsia canadensis (strain McKiel)).